Consider the following 325-residue polypeptide: Tetraacyldisaccharide 4'-kinase (325 aa).

55–62 (TAGGNGKT) is an ATP binding site.

It belongs to the LpxK family.

The enzyme catalyses a lipid A disaccharide + ATP = a lipid IVA + ADP + H(+). It participates in glycolipid biosynthesis; lipid IV(A) biosynthesis; lipid IV(A) from (3R)-3-hydroxytetradecanoyl-[acyl-carrier-protein] and UDP-N-acetyl-alpha-D-glucosamine: step 6/6. Functionally, transfers the gamma-phosphate of ATP to the 4'-position of a tetraacyldisaccharide 1-phosphate intermediate (termed DS-1-P) to form tetraacyldisaccharide 1,4'-bis-phosphate (lipid IVA). The sequence is that of Tetraacyldisaccharide 4'-kinase from Salmonella agona (strain SL483).